A 68-amino-acid polypeptide reads, in one-letter code: Beta-defensin 1 (68 aa).

The signal sequence occupies residues 1-21 (MRTSYLLLFTLCLLLSEMASG). Positions 22–32 (GNFLTGLGHRS) are excised as a propeptide. 3 disulfide bridges follow: cysteine 37–cysteine 66, cysteine 44–cysteine 59, and cysteine 49–cysteine 67.

The protein belongs to the beta-defensin family. As to quaternary structure, monomer. Homodimer.

It is found in the secreted. The protein resides in the membrane. Its function is as follows. Has bactericidal activity. May act as a ligand for C-C chemokine receptor CCR6. Positively regulates the sperm motility and bactericidal activity in a CCR6-dependent manner. Binds to CCR6 and triggers Ca2+ mobilization in the sperm which is important for its motility. The sequence is that of Beta-defensin 1 (DEFB1) from Pan troglodytes (Chimpanzee).